A 523-amino-acid polypeptide reads, in one-letter code: Mitochondrial distribution and morphology protein 12 (523 aa).

An SMP-LTD domain is found at 1–483 (MSFDINWEKL…WPSWICVDMA (483 aa)). Residues 108–117 (HEADIINDHD) show a composition bias toward basic and acidic residues. Disordered stretches follow at residues 108 to 160 (HEAD…QYDE), 178 to 213 (SASTPKRTSPQRPPLISPRGEVTQQTLSKPKEPFQS), 270 to 313 (KTKE…NAKN), and 483 to 523 (AEND…KKED). Composition is skewed to acidic residues over residues 118 to 140 (YGDEDDIDDDYDNDSDDYDDDEN) and 148 to 158 (EDEENEESSQY). Composition is skewed to polar residues over residues 178-187 (SASTPKRTSP) and 277-288 (SGDQQQGKQTGK). Over residues 289–313 (ANEKGQKHKHEHEEEQGSDKQNAKN) the composition is skewed to basic and acidic residues. The segment covering 483 to 501 (AENDDEEEDDDDDDHDEDN) has biased composition (acidic residues). The span at 502-523 (EGRGRMRDTGDVDVRDHDKKED) shows a compositional bias: basic and acidic residues.

The protein belongs to the MDM12 family. As to quaternary structure, component of the ER-mitochondria encounter structure (ERMES) or MDM complex, composed of MMM1, MDM10, MDM12 and MDM34. An MMM1 homodimer associates with one molecule of MDM12 on each side in a pairwise head-to-tail manner, and the SMP-LTD domains of MMM1 and MDM12 generate a continuous hydrophobic tunnel for phospholipid trafficking.

The protein resides in the mitochondrion outer membrane. It is found in the endoplasmic reticulum membrane. Its function is as follows. Component of the ERMES/MDM complex, which serves as a molecular tether to connect the endoplasmic reticulum (ER) and mitochondria. Components of this complex are involved in the control of mitochondrial shape and protein biogenesis, and function in nonvesicular lipid trafficking between the ER and mitochondria. MDM12 is required for the interaction of the ER-resident membrane protein MMM1 and the outer mitochondrial membrane-resident beta-barrel protein MDM10. The MDM12-MMM1 subcomplex functions in the major beta-barrel assembly pathway that is responsible for biogenesis of all mitochondrial outer membrane beta-barrel proteins, and acts in a late step after the SAM complex. The MDM10-MDM12-MMM1 subcomplex further acts in the TOM40-specific pathway after the action of the MDM12-MMM1 complex. Essential for establishing and maintaining the structure of mitochondria and maintenance of mtDNA nucleoids. This is Mitochondrial distribution and morphology protein 12 from Lodderomyces elongisporus (strain ATCC 11503 / CBS 2605 / JCM 1781 / NBRC 1676 / NRRL YB-4239) (Yeast).